The following is a 446-amino-acid chain: Serine--tRNA ligase, mitochondrial (446 aa).

Residue Thr251 to Glu253 participates in L-serine binding. ATP-binding positions include Arg284–Glu286 and Val300. Glu307 provides a ligand contact to L-serine. Glu371 to Ser374 provides a ligand contact to ATP. Position 407 (Thr407) interacts with L-serine.

The protein belongs to the class-II aminoacyl-tRNA synthetase family. Type-1 seryl-tRNA synthetase subfamily. Homodimer. The tRNA molecule binds across the dimer.

It is found in the mitochondrion matrix. The enzyme catalyses tRNA(Ser) + L-serine + ATP = L-seryl-tRNA(Ser) + AMP + diphosphate + H(+). Functionally, catalyzes the attachment of serine to tRNA(Ser). This Saccharomyces cerevisiae (strain ATCC 204508 / S288c) (Baker's yeast) protein is Serine--tRNA ligase, mitochondrial (DIA4).